The following is a 72-amino-acid chain: Large ribosomal subunit protein bL28 (72 aa).

The protein belongs to the bacterial ribosomal protein bL28 family.

The polypeptide is Large ribosomal subunit protein bL28 (Chlorobium chlorochromatii (strain CaD3)).